The following is a 486-amino-acid chain: Aromatic-L-amino-acid decarboxylase (486 aa).

At M1 the chain carries N-acetylmethionine. Tandem repeats lie at residues 58–115 (QDVE…TELE) and 118–178 (MMDW…TQGA). Residues 58–178 (QDVEKIIMPG…AASPGLTQGA (121 aa)) are 2 X approximate tandem repeats. T82 serves as a coordination point for substrate. Residues A148 and S149 each coordinate pyridoxal 5'-phosphate. H192 is a binding site for substrate. Residues T246 and N300 each contribute to the pyridoxal 5'-phosphate site. An N6-(pyridoxal phosphate)lysine modification is found at K303.

The protein belongs to the group II decarboxylase family. In terms of assembly, homodimer. Requires pyridoxal 5'-phosphate as cofactor.

The catalysed reaction is L-dopa + H(+) = dopamine + CO2. The enzyme catalyses 5-hydroxy-L-tryptophan + H(+) = serotonin + CO2. It functions in the pathway catecholamine biosynthesis; dopamine biosynthesis; dopamine from L-tyrosine: step 2/2. In terms of biological role, catalyzes the decarboxylation of L-3,4-dihydroxyphenylalanine (DOPA) to dopamine and L-5-hydroxytryptophan to serotonin. The protein is Aromatic-L-amino-acid decarboxylase (DDC) of Sus scrofa (Pig).